The following is a 1013-amino-acid chain: GTPase-activating Rap/Ran-GAP domain-like protein 3 (1013 aa).

Residue serine 45 is modified to Phosphoserine. Residues 191 to 407 (LLVLEEQEGS…RTLDMLIRSL (217 aa)) form the Rap-GAP domain. Serine 426 and serine 432 each carry phosphoserine. Residues 489–800 (PHEAVCADPW…QLVASRSDIY (312 aa)) form the CNH domain. Disordered stretches follow at residues 810–842 (VSSGGSSKGASARNSPQTPPGRDTPVFPSSLGE) and 913–1013 (LLGL…IDLK). A compositionally biased stretch (low complexity) spans 811 to 821 (SSGGSSKGASA). Threonine 827 is subject to Phosphothreonine. The segment covering 952–962 (SSSSDRIPSGS) has biased composition (low complexity). Composition is skewed to polar residues over residues 963-982 (LESASTSEANPEGHSASSDQ) and 993-1003 (VSGSSPFQLTA).

The protein belongs to the GARNL3 family.

In Homo sapiens (Human), this protein is GTPase-activating Rap/Ran-GAP domain-like protein 3 (GARNL3).